The sequence spans 285 residues: Vacuolar protein sorting-associated protein 37B (285 aa).

An interaction with IST1 region spans residues 50–170 (ASNRSLAEGN…ELVLKGQRHP (121 aa)). Residues 84-173 (FEAYQIKKTK…LKGQRHPQAG (90 aa)) form the VPS37 C-terminal domain. Disordered stretches follow at residues 167-215 (QRHP…PPVP) and 242-285 (PLPP…FILQ). Composition is skewed to pro residues over residues 173-184 (GAPPPPRVPEPS) and 206-215 (RIPPPPPPVP). Over residues 250-259 (PSQQGFSAQL) the composition is skewed to polar residues. The segment covering 262–275 (PYPPALPQRPPPRM) has biased composition (pro residues). Positions 276–285 (APHQPGFILQ) are enriched in low complexity.

This sequence belongs to the VPS37 family. In terms of assembly, component of the ESCRT-I complex (endosomal sorting complex required for transport I) which consists of TSG101, VPS28, a VPS37 protein (VPS37A to -D) and MVB12A or MVB12B in a 1:1:1:1 stoichiometry. Interacts with TSG101, VPS28, MVB12A and MVB12B. Component of the ESCRT-I complex (endosomal sorting complex required for transport I) which consists of TSG101, VPS28, a VPS37 protein (VPS37A to -D) and UBAP1 in a 1:1:1:1 stoichiometry. Interacts with CEP55. Interacts with IST1.

The protein localises to the late endosome membrane. In terms of biological role, component of the ESCRT-I complex, a regulator of vesicular trafficking process. Required for the sorting of endocytic ubiquitinated cargos into multivesicular bodies. May be involved in cell growth and differentiation. The sequence is that of Vacuolar protein sorting-associated protein 37B (Vps37b) from Mus musculus (Mouse).